A 743-amino-acid chain; its full sequence is Acetyl-coenzyme A synthetase, chloroplastic/glyoxysomal (743 aa).

Residues 1 to 84 (MKIGSPSSPI…LNAVVLGESL (84 aa)) constitute a chloroplast transit peptide. Aspartate 613 is an active-site residue.

This sequence belongs to the ATP-dependent AMP-binding enzyme family. In terms of tissue distribution, expressed in leaves, flower buds and young flowers.

Its subcellular location is the plastid. The protein resides in the chloroplast. It localises to the glyoxysome. It catalyses the reaction acetate + ATP + CoA = acetyl-CoA + AMP + diphosphate. Functionally, catalyzes the production of acetyl-CoA, an activated form of acetate that can be used for lipid synthesis or for energy generation. May play a limited role in the biosynthesis of lipids. The chain is Acetyl-coenzyme A synthetase, chloroplastic/glyoxysomal (ACS) from Arabidopsis thaliana (Mouse-ear cress).